The chain runs to 155 residues: MRAVVQRVSQASVTVGDEVVGAIGQGLLILLGIGVGDSEAEARLLAEKTANLRIFADEEGRFNRSLLDIGGEALVVSQFTLYADTRRGRRPSFSDAAPPEIAAPLVDVFAGELRRLGVAVSTGRFGAMMRVALVNDGPVTILLDSAIFREPRNQH.

Residues 137-138 (GP) carry the Gly-cisPro motif, important for rejection of L-amino acids motif.

It belongs to the DTD family. As to quaternary structure, homodimer.

It is found in the cytoplasm. The catalysed reaction is glycyl-tRNA(Ala) + H2O = tRNA(Ala) + glycine + H(+). It carries out the reaction a D-aminoacyl-tRNA + H2O = a tRNA + a D-alpha-amino acid + H(+). Its function is as follows. An aminoacyl-tRNA editing enzyme that deacylates mischarged D-aminoacyl-tRNAs. Also deacylates mischarged glycyl-tRNA(Ala), protecting cells against glycine mischarging by AlaRS. Acts via tRNA-based rather than protein-based catalysis; rejects L-amino acids rather than detecting D-amino acids in the active site. By recycling D-aminoacyl-tRNA to D-amino acids and free tRNA molecules, this enzyme counteracts the toxicity associated with the formation of D-aminoacyl-tRNA entities in vivo and helps enforce protein L-homochirality. The protein is D-aminoacyl-tRNA deacylase of Roseiflexus sp. (strain RS-1).